The sequence spans 334 residues: Cathepsin J (334 aa).

Positions 1 to 17 are cleaved as a signal peptide; the sequence is MTPTVLLLILCFGVASG. A propeptide spans 18–113 (activation peptide); it reads AQAHDPKLDA…PHAQNHVSIG (96 aa). A glycan (N-linked (GlcNAc...) asparagine) is linked at asparagine 72. Cystine bridges form between cysteine 135/cysteine 178 and cysteine 169/cysteine 211. Residue cysteine 138 is part of the active site. N-linked (GlcNAc...) asparagine glycosylation is found at asparagine 217, asparagine 221, and asparagine 268. Cysteine 269 and cysteine 322 form a disulfide bridge. Catalysis depends on residues histidine 276 and asparagine 300.

This sequence belongs to the peptidase C1 family. In terms of tissue distribution, expressed specifically in placenta.

It is found in the lysosome. This is Cathepsin J (Ctsj) from Mus musculus (Mouse).